A 312-amino-acid chain; its full sequence is Pyrimidine-specific ribonucleoside hydrolase RihA (312 aa).

Histidine 240 is a catalytic residue.

This sequence belongs to the IUNH family. RihA subfamily.

Its function is as follows. Hydrolyzes cytidine or uridine to ribose and cytosine or uracil, respectively. This Shewanella woodyi (strain ATCC 51908 / MS32) protein is Pyrimidine-specific ribonucleoside hydrolase RihA.